Reading from the N-terminus, the 675-residue chain is DNA ligase (675 aa).

Residues 35-39 (DAVYD), 84-85 (SL), and Glu118 contribute to the NAD(+) site. The N6-AMP-lysine intermediate role is filled by Lys120. Residues Arg141, Glu178, Lys295, and Lys319 each contribute to the NAD(+) site. Residues Cys413, Cys416, Cys431, and Cys436 each coordinate Zn(2+). Residues 598 to 675 (GAIGALTGQT…DEAELKALLS (78 aa)) form the BRCT domain.

Belongs to the NAD-dependent DNA ligase family. LigA subfamily. Mg(2+) serves as cofactor. It depends on Mn(2+) as a cofactor.

The enzyme catalyses NAD(+) + (deoxyribonucleotide)n-3'-hydroxyl + 5'-phospho-(deoxyribonucleotide)m = (deoxyribonucleotide)n+m + AMP + beta-nicotinamide D-nucleotide.. Functionally, DNA ligase that catalyzes the formation of phosphodiester linkages between 5'-phosphoryl and 3'-hydroxyl groups in double-stranded DNA using NAD as a coenzyme and as the energy source for the reaction. It is essential for DNA replication and repair of damaged DNA. The sequence is that of DNA ligase from Synechococcus sp. (strain RCC307).